Here is a 449-residue protein sequence, read N- to C-terminus: Cytochrome P450 2E1 (449 aa).

254 to 259 lines the substrate pocket; that stretch reads FAGTET. A heme-binding site is contributed by cysteine 393.

Belongs to the cytochrome P450 family. Interacts with chaperones HSP70 and HSP90; this interaction is required for initial targeting to mitochondria. The cofactor is heme.

The protein localises to the endoplasmic reticulum membrane. Its subcellular location is the microsome membrane. It is found in the mitochondrion inner membrane. The catalysed reaction is an organic molecule + reduced [NADPH--hemoprotein reductase] + O2 = an alcohol + oxidized [NADPH--hemoprotein reductase] + H2O + H(+). It carries out the reaction (5Z,8Z,11Z)-eicosatrienoate + reduced [NADPH--hemoprotein reductase] + O2 = 19-hydroxy-(5Z,8Z,11Z)-eicosatrienoate + oxidized [NADPH--hemoprotein reductase] + H2O + H(+). The enzyme catalyses (5Z,8Z,11Z,14Z,17Z)-eicosapentaenoate + reduced [NADPH--hemoprotein reductase] + O2 = 19-hydroxy-(5Z,8Z,11Z,14Z,17Z)-eicosapentaenoate + oxidized [NADPH--hemoprotein reductase] + H2O + H(+). It catalyses the reaction (4Z,7Z,10Z,13Z,16Z,19Z)-docosahexaenoate + reduced [NADPH--hemoprotein reductase] + O2 = 21-hydroxy-(4Z,7Z,10Z,13Z,16Z,19Z)-docosahexaenoate + oxidized [NADPH--hemoprotein reductase] + H2O + H(+). The catalysed reaction is dodecanoate + reduced [NADPH--hemoprotein reductase] + O2 = 11-hydroxydodecanoate + oxidized [NADPH--hemoprotein reductase] + H2O + H(+). It carries out the reaction tetradecanoate + reduced [NADPH--hemoprotein reductase] + O2 = 13-hydroxytetradecanoate + oxidized [NADPH--hemoprotein reductase] + H2O + H(+). The enzyme catalyses 4-nitrophenol + NADPH + O2 + H(+) = 4-nitrocatechol + NADP(+) + H2O. Its pathway is lipid metabolism; fatty acid metabolism. With respect to regulation, the omega-1 hydroxylase activity is stimulated by cytochrome b5. A cytochrome P450 monooxygenase involved in the metabolism of fatty acids. Mechanistically, uses molecular oxygen inserting one oxygen atom into a substrate, and reducing the second into a water molecule, with two electrons provided by NADPH via cytochrome P450 reductase (NADPH--hemoprotein reductase). Catalyzes the hydroxylation of carbon-hydrogen bonds. Hydroxylates fatty acids specifically at the omega-1 position displaying the highest catalytic activity for saturated fatty acids. May be involved in the oxidative metabolism of xenobiotics. The protein is Cytochrome P450 2E1 (CYP2E1) of Macaca fascicularis (Crab-eating macaque).